The sequence spans 588 residues: L-fucose isomerase (588 aa).

Active-site proton acceptor residues include Glu335 and Asp359. Residues Glu335, Asp359, and His525 each contribute to the Mn(2+) site.

Belongs to the L-fucose isomerase family. It depends on Mn(2+) as a cofactor.

Its subcellular location is the cytoplasm. The enzyme catalyses L-fucose = L-fuculose. The protein operates within carbohydrate degradation; L-fucose degradation; L-lactaldehyde and glycerone phosphate from L-fucose: step 1/3. Functionally, converts the aldose L-fucose into the corresponding ketose L-fuculose. This is L-fucose isomerase from Streptococcus pneumoniae (strain JJA).